Consider the following 140-residue polypeptide: L-fucose mutarotase (140 aa).

Residue His22 is the Proton donor of the active site. Substrate is bound by residues Asp30, Arg107, and Tyr129–Asn131.

This sequence belongs to the RbsD / FucU family. FucU mutarotase subfamily. As to quaternary structure, homodecamer.

It is found in the cytoplasm. It carries out the reaction alpha-L-fucose = beta-L-fucose. The protein operates within carbohydrate metabolism; L-fucose metabolism. Involved in the anomeric conversion of L-fucose. The sequence is that of L-fucose mutarotase from Shigella boydii serotype 18 (strain CDC 3083-94 / BS512).